The sequence spans 70 residues: NAD(P)H-quinone oxidoreductase subunit O (70 aa).

Belongs to the complex I NdhO subunit family. NDH-1 can be composed of about 15 different subunits; different subcomplexes with different compositions have been identified which probably have different functions.

It localises to the cellular thylakoid membrane. It carries out the reaction a plastoquinone + NADH + (n+1) H(+)(in) = a plastoquinol + NAD(+) + n H(+)(out). The catalysed reaction is a plastoquinone + NADPH + (n+1) H(+)(in) = a plastoquinol + NADP(+) + n H(+)(out). Its function is as follows. NDH-1 shuttles electrons from an unknown electron donor, via FMN and iron-sulfur (Fe-S) centers, to quinones in the respiratory and/or the photosynthetic chain. The immediate electron acceptor for the enzyme in this species is believed to be plastoquinone. Couples the redox reaction to proton translocation, and thus conserves the redox energy in a proton gradient. Cyanobacterial NDH-1 also plays a role in inorganic carbon-concentration. In Nostoc sp. (strain PCC 7120 / SAG 25.82 / UTEX 2576), this protein is NAD(P)H-quinone oxidoreductase subunit O.